Consider the following 540-residue polypeptide: Zinc transporter ZIP5 (540 aa).

The signal sequence occupies residues 1-20 (MMGSPVSHLLAGFCVWVVLG). Residues 21–212 (WVGGSVPNLG…PAPPGDLLSA (192 aa)) are Extracellular-facing. Asparagine 50 carries an N-linked (GlcNAc...) asparagine glycan. Residues 78–101 (HGPLTGRAASPAADNSTHRPQNPE) are disordered. The segment covering 90–101 (ADNSTHRPQNPE) has biased composition (polar residues). An N-linked (GlcNAc...) asparagine glycan is attached at asparagine 160. Residues 213–233 (LLQSALAVLLLSLPSPLSLLL) traverse the membrane as a helical segment. The Cytoplasmic segment spans residues 234–244 (LRLLGPRLLRP). Residues 245–265 (LLGFLGALAVGTLCGDALLHL) traverse the membrane as a helical segment. Topologically, residues 266-287 (LPHAQEGRHAGPGGLPEKDLGP) are extracellular. The chain crosses the membrane as a helical span at residues 288-308 (GLSVLGGLFLLFVLENMLGLL). At 309 to 444 (RHRGLRPRCC…LLQSGLSFRR (136 aa)) the chain is on the cytoplasmic side. A disordered region spans residues 324-377 (NLETRNLDPENGSGMALQPLQAAPEPGAQGQREKNSQHPPALAPPGHQGHSHGH). At serine 336 the chain carries Phosphoserine. A Pros-methylhistidine modification is found at histidine 375. Residues 445–465 (LLLLSLVSGALGLGGAVLGVG) traverse the membrane as a helical segment. Topologically, residues 466-470 (LSLGP) are extracellular. Residues 471-491 (VPLTPWVFGVTAGVFLYVALV) traverse the membrane as a helical segment. The Cytoplasmic portion of the chain corresponds to 492–508 (DMLPALLRPPEPLPTPH). Residues 509 to 529 (VLLQGLGLLLGGGLMLAITLL) traverse the membrane as a helical segment. Over 530-540 (EERLLPVTTEG) the chain is Extracellular.

This sequence belongs to the ZIP transporter (TC 2.A.5) family. In terms of assembly, homodimer. In terms of processing, methylated at His-375 by METTL9. Post-translationally, N-Glycosylated. As to expression, expressed in liver, kidney, pancreas, small intestine, colon, spleen, fetal liver and fetal kidney.

Its subcellular location is the basolateral cell membrane. It catalyses the reaction Zn(2+)(in) = Zn(2+)(out). In terms of biological role, uniporter that transports zinc(2+) into polarized cells of enterocytes, pancreatic acinar and endoderm cells across the basolateral membrane and participates, notably, in zinc excretion from the intestine by the uptake of zinc from the blood into the intestine. The transport mechanism is temperature- and concentration-dependent and saturable. In addition, is also a high affinity copper transporter in vitro. Also may regulate glucose-stimulated insulin secretion (GSIS) in islets primarily through the zinc-activated SIRT1-PPARGC1A axis. Could regulate the BMP/TGF-beta (bone morphogenetic protein/transforming growth factor-beta) signaling pathway and modulates extracellular matrix (ECM) proteins of the sclera. Plays a role in eye development. The polypeptide is Zinc transporter ZIP5 (Homo sapiens (Human)).